A 1145-amino-acid chain; its full sequence is Protocadherin-19 (1145 aa).

A signal peptide spans 1 to 21 (MESLLLPVLLLLAVLWTQAAA). 6 Cadherin domains span residues 22-129 (LINL…APSF), 130-238 (PAAQ…NPVF), 239-346 (GEST…PPII), 350-453 (SVNS…HPHF), 454-563 (SKPY…TPVI), and 569-672 (INGT…QESM). At 22–678 (LINLKYSVEE…QESMGSVNLS (657 aa)) the chain is on the extracellular side. Ca(2+) contacts are provided by Glu-31, Glu-32, Asp-88, and Asp-90. Cysteines 93 and 99 form a disulfide. Ca(2+) is bound by residues Asp-121, Asn-123, Asp-124, Asn-125, Glu-140, Asp-155, Asp-157, Glu-199, Asp-212, Asp-230, Ser-231, Asn-232, Asp-233, Asn-234, and Glu-249. Asn-261 is a glycosylation site (N-linked (GlcNAc...) asparagine). Residues Asp-264, Asp-266, Asn-270, Asp-305, Glu-307, Asp-338, Asn-340, Asp-341, Asn-342, Glu-360, Asp-375, Asp-377, Asn-381, Asp-412, and Glu-414 each coordinate Ca(2+). Residue Asn-420 is glycosylated (N-linked (GlcNAc...) asparagine). 13 residues coordinate Ca(2+): Asp-427, Asp-445, Glu-446, Asn-447, Asp-448, Asn-449, Glu-464, Asp-479, Asp-481, Asn-485, Asn-522, Glu-524, and Asp-537. A glycan (N-linked (GlcNAc...) asparagine) is linked at Asn-485. N-linked (GlcNAc...) asparagine glycosylation occurs at Asn-546. The Ca(2+) site is built by Asp-555, Val-556, Asn-557, Asp-558, and Asn-559. An N-linked (GlcNAc...) asparagine glycan is attached at Asn-570. Positions 594, 596, 600, and 646 each coordinate Ca(2+). N-linked (GlcNAc...) asparagine glycosylation is present at Asn-676. Residues 679–699 (LIFIIALGSIAGILFVTMIFV) traverse the membrane as a helical segment. Residues 700-1145 (AIKCKRDNKE…SVKRLKDIVL (446 aa)) are Cytoplasmic-facing. Disordered stretches follow at residues 901 to 921 (GNSL…EHDV) and 1094 to 1145 (LEHH…DIVL). 2 stretches are compositionally biased toward basic and acidic residues: residues 906–921 (DSGH…EHDV) and 1106–1145 (SEAE…DIVL).

As to quaternary structure, homodimer; antiparallel.

The protein resides in the cell membrane. Calcium-dependent cell-adhesion protein. This is Protocadherin-19 (Pcdh19) from Mus musculus (Mouse).